A 691-amino-acid polypeptide reads, in one-letter code: Beta-galactosidase III (691 aa).

The substrate site is built by Arg-121 and Asn-159. The Proton donor role is filled by Glu-160. Catalysis depends on Glu-318, which acts as the Nucleophile. Substrate is bound by residues Trp-326 and 366-369 (EKWH).

The protein belongs to the glycosyl hydrolase 42 family.

The enzyme catalyses Hydrolysis of terminal non-reducing beta-D-galactose residues in beta-D-galactosides.. In terms of biological role, specific for beta-D-anomer-linked galactoside substrates. Hydrolyzes o-nitrophenyl-beta-D-galactopyranoside (ONPG), chromogen 5-bromo-4-chloro-3-indolyl-beta-D-galactopyranoside (X-gal) and to a lesser extent lactose. Hydrolyzes p-nitrophenyl-beta-D-galacturonide very slightly. Does not hydrolyze maltose, sucrose, raffinose or melibiose. Has some transgalactosylation activity yielding galacto-oligosaccharides (GaOS), including O-beta-D-galactopyranosyl-(1,3)-O-beta-D-galactopyranosyl-(1-4)-D-glucopyranose. The polypeptide is Beta-galactosidase III (Bifidobacterium longum subsp. infantis).